A 62-amino-acid polypeptide reads, in one-letter code: Large ribosomal subunit protein uL30 (62 aa).

Belongs to the universal ribosomal protein uL30 family. As to quaternary structure, part of the 50S ribosomal subunit.

In Prosthecochloris aestuarii (strain DSM 271 / SK 413), this protein is Large ribosomal subunit protein uL30.